We begin with the raw amino-acid sequence, 234 residues long: MLRIGYRGFSTRSRVFKLSPQEYVNQVQQEKIENEQFKQALSQDQLEYNPKILSSHKLTKNRPIPINVELLKYKPLRLPKTHGDEVATLTIRGYDEDNLIRVGEFALRTAYYMGIPMSPLMALKTEKRLYTVIKSPFAQAKTKQNFHRVTYKKKLVAYDANPEIIDLWLSYINKNKFTDVEYKATVSSYESLNYHEELKSLKEFNLPDAYEGIEDPVAKKVQELLKSKSFKKHL.

The transit peptide at 1-23 (MLRIGYRGFSTRSRVFKLSPQEY) directs the protein to the mitochondrion.

The protein belongs to the universal ribosomal protein uS10 family. In terms of assembly, component of the mitochondrial small ribosomal subunit (mt-SSU).

It is found in the mitochondrion. Functionally, component of the mitochondrial ribosome (mitoribosome), a dedicated translation machinery responsible for the synthesis of mitochondrial genome-encoded proteins, including at least some of the essential transmembrane subunits of the mitochondrial respiratory chain. The mitoribosomes are attached to the mitochondrial inner membrane and translation products are cotranslationally integrated into the membrane. This chain is Small ribosomal subunit protein uS10m (RSM10), found in Candida albicans (strain SC5314 / ATCC MYA-2876) (Yeast).